The primary structure comprises 174 residues: uncharacterized protein (174 aa).

Belongs to the mimivirus L39/R874 family.

This is an uncharacterized protein from Acanthamoeba polyphaga (Amoeba).